A 364-amino-acid chain; its full sequence is Protein leg1a (364 aa).

An N-terminal signal peptide occupies residues 1–22 (MSEMGFLRSVAAVLLLAVFSHA). The N-linked (GlcNAc...) asparagine glycan is linked to N70.

It belongs to the LEG1 family. Detected in all tissues tested, with the highest levels in serum (at protein level). At mRNA level, only expressed in liver.

The protein localises to the secreted. In terms of biological role, important for early development of liver, exocrine pancreas and intestine, probably through cell cycle regulation. In liver, its function is partially redundant with leg1b function. In Danio rerio (Zebrafish), this protein is Protein leg1a.